The primary structure comprises 478 residues: Sedoheptulokinase (478 aa).

The protein belongs to the FGGY kinase family. In terms of tissue distribution, strongly expressed in liver, kidney and pancreas. Expressed at lower levels in placenta and heart. Very weakly expressed in lung and brain.

Its subcellular location is the cytoplasm. The catalysed reaction is sedoheptulose + ATP = D-sedoheptulose 7-phosphate + ADP + H(+). Acts as a modulator of macrophage activation through control of glucose metabolism. This Homo sapiens (Human) protein is Sedoheptulokinase.